Here is a 444-residue protein sequence, read N- to C-terminus: ATP-dependent RNA helicase SrmB (444 aa).

The Q motif signature appears at 4 to 32; the sequence is TTFSELELDESLLEALQDKGFTRPTAIQA. The Helicase ATP-binding domain maps to 35–209; that stretch reads IPPALDGRDV…AERLLEDPVE (175 aa). 48–55 is an ATP binding site; it reads APTGTGKT. Residues 157-160 carry the DEAD box motif; the sequence is DEAD. The region spanning 238–387 is the Helicase C-terminal domain; sequence LLVHLLKQPE…ELRPKTRAPS (150 aa). The segment covering 382 to 391 has biased composition (basic and acidic residues); that stretch reads KTRAPSEKQT. The disordered stretch occupies residues 382 to 444; sequence KTRAPSEKQT…TGVPPQTTEE (63 aa). 2 stretches are compositionally biased toward basic residues: residues 394 to 406 and 414 to 432; these read PSKKVLAKRAEKK and PRVKKRHRDTKNIGKRRKP.

It belongs to the DEAD box helicase family. SrmB subfamily. In terms of assembly, interacts with the 50S ribosomal subunit. Forms a complex with the 50S ribosomal proteins L4 and L24, and a region near the 5'-end of 23S rRNA.

The protein localises to the cytoplasm. The enzyme catalyses ATP + H2O = ADP + phosphate + H(+). Functionally, DEAD-box RNA helicase involved in the assembly of the 50S ribosomal subunit at low temperature. Exhibits RNA-stimulated ATP hydrolysis and RNA unwinding activity. Acts before DeaD. This Escherichia coli (strain K12) protein is ATP-dependent RNA helicase SrmB.